The primary structure comprises 271 residues: 3-methyl-2-oxobutanoate hydroxymethyltransferase (271 aa).

Mg(2+) contacts are provided by Asp-51 and Asp-90. 3-methyl-2-oxobutanoate contacts are provided by residues 51–52 (DS), Asp-90, and Lys-118. Glu-120 serves as a coordination point for Mg(2+). Glu-186 serves as the catalytic Proton acceptor.

The protein belongs to the PanB family. In terms of assembly, homodecamer; pentamer of dimers. Mg(2+) is required as a cofactor.

It localises to the cytoplasm. It catalyses the reaction 3-methyl-2-oxobutanoate + (6R)-5,10-methylene-5,6,7,8-tetrahydrofolate + H2O = 2-dehydropantoate + (6S)-5,6,7,8-tetrahydrofolate. It participates in cofactor biosynthesis; (R)-pantothenate biosynthesis; (R)-pantoate from 3-methyl-2-oxobutanoate: step 1/2. Its function is as follows. Catalyzes the reversible reaction in which hydroxymethyl group from 5,10-methylenetetrahydrofolate is transferred onto alpha-ketoisovalerate to form ketopantoate. This chain is 3-methyl-2-oxobutanoate hydroxymethyltransferase, found in Xanthomonas oryzae pv. oryzae (strain MAFF 311018).